The chain runs to 264 residues: Indole-3-glycerol phosphate synthase (264 aa).

It belongs to the TrpC family.

The enzyme catalyses 1-(2-carboxyphenylamino)-1-deoxy-D-ribulose 5-phosphate + H(+) = (1S,2R)-1-C-(indol-3-yl)glycerol 3-phosphate + CO2 + H2O. It functions in the pathway amino-acid biosynthesis; L-tryptophan biosynthesis; L-tryptophan from chorismate: step 4/5. The protein is Indole-3-glycerol phosphate synthase of Albidiferax ferrireducens (strain ATCC BAA-621 / DSM 15236 / T118) (Rhodoferax ferrireducens).